A 130-amino-acid chain; its full sequence is Serum amyloid A-4 protein (130 aa).

The first 18 residues, 1–18, serve as a signal peptide directing secretion; sequence MRLFTGIVFCSLVMGVTS. Asn94 is a glycosylation site (N-linked (GlcNAc...) asparagine; partial). Residues 101–130 form a disordered region; the sequence is DSKSNEKAEEWGRSGKDPDRFRPDGLPKKY.

The protein belongs to the SAA family. Apolipoprotein of the HDL complex. In terms of tissue distribution, expressed by the liver; secreted in plasma.

The protein resides in the secreted. Functionally, major acute phase reactant. This Homo sapiens (Human) protein is Serum amyloid A-4 protein.